The chain runs to 187 residues: Corticoliberin (187 aa).

A signal peptide spans 1–24 (MRLRLLVSAGMLLVALSPCLPCRA). The propeptide occupies 25 to 144 (LLSRGSVSGA…HQGALERERR (120 aa)). A disordered region spans residues 75–95 (AARLSPNSTPLTAGRGSRPSH). The residue at position 185 (I185) is an Isoleucine amide.

This sequence belongs to the sauvagine/corticotropin-releasing factor/urotensin I family. Interacts (via C-terminus) with CRFR1 (via N-terminal extracellular domain). Produced by the hypothalamus.

It localises to the secreted. Its function is as follows. Hormone regulating the release of corticotropin from pituitary gland. Induces NLRP6 in intestinal epithelial cells, hence may influence gut microbiota profile. The polypeptide is Corticoliberin (Crh) (Rattus norvegicus (Rat)).